The chain runs to 756 residues: Probable cleavage and polyadenylation specificity factor subunit 2 (756 aa).

Thr221 and Thr226 each carry phosphothreonine.

This sequence belongs to the metallo-beta-lactamase superfamily. RNA-metabolizing metallo-beta-lactamase-like family. CPSF2/YSH1 subfamily. In terms of assembly, component of the cleavage and polyadenylation specificity factor (CPSF) complex, composed of at least Clp, Cpsf73, Cpsf100 and Cpsf160. Interacts with Sym and Cpsf73 forming a core cleavage factor required for both polyadenylated and histone mRNA processing. Interacts with Slbp and Lsm11.

It is found in the nucleus. Component of the cleavage and polyadenylation specificity factor (CPSF) complex that plays a key role in pre-mRNA 3'-end formation, recognizing the AAUAAA signal sequence and interacting with poly(A) polymerase and other factors to bring about cleavage and poly(A) addition. Required for the cotranscriptional processing of 3'-ends of polyadenylated and histone pre-mRNA. The protein is Probable cleavage and polyadenylation specificity factor subunit 2 (Cpsf100) of Drosophila melanogaster (Fruit fly).